The following is a 170-amino-acid chain: Small ribosomal subunit protein eS7 (170 aa).

It belongs to the eukaryotic ribosomal protein eS7 family. Component of the small ribosomal subunit.

It localises to the cytoplasm. The chain is Small ribosomal subunit protein eS7 (RPS7) from Encephalitozoon cuniculi (strain GB-M1) (Microsporidian parasite).